An 863-amino-acid chain; its full sequence is Oleate activated transcription factor 3 (863 aa).

Residues 19 to 47 (CTNCKKRKSKCDRTKPCGTCVRLGDVDSC) constitute a DNA-binding region (zn(2)-C6 fungal-type). Over residues 52–63 (DSSGQPESSPSL) the composition is skewed to polar residues. Positions 52-81 (DSSGQPESSPSLNDADPLRKQSTPAERISP) are disordered.

It belongs to the OAF3 family.

The protein localises to the cytoplasm. It is found in the nucleus. Its subcellular location is the mitochondrion. Transcriptional inhibitor with a significantly increased number of target genes in response to oleate. The protein is Oleate activated transcription factor 3 (OAF3) of Saccharomyces cerevisiae (strain RM11-1a) (Baker's yeast).